A 281-amino-acid chain; its full sequence is Imidazoleglycerol-phosphate dehydratase, chloroplastic (281 aa).

The N-terminal 85 residues, 1–85 (MELYAASHSL…TSLPFHPETR (85 aa)), are a transit peptide targeting the chloroplast. Substrate contacts are provided by residues Glu-95, 121 to 129 (HMLDQLASH), 147 to 151 (HHTNE), Arg-173, and Arg-195. 4 residues coordinate Mn(2+): His-121, His-147, His-148, and Glu-151. Mn(2+) contacts are provided by His-219, His-243, His-244, and Glu-247. Residues 243–251 (HHIIEATFK) and 273–275 (SSK) each bind substrate.

This sequence belongs to the imidazoleglycerol-phosphate dehydratase family. The cofactor is Mn(2+).

It localises to the plastid. The protein localises to the chloroplast. The catalysed reaction is D-erythro-1-(imidazol-4-yl)glycerol 3-phosphate = 3-(imidazol-4-yl)-2-oxopropyl phosphate + H2O. Its pathway is amino-acid biosynthesis; L-histidine biosynthesis; L-histidine from 5-phospho-alpha-D-ribose 1-diphosphate: step 6/9. In Pisum sativum (Garden pea), this protein is Imidazoleglycerol-phosphate dehydratase, chloroplastic.